A 773-amino-acid chain; its full sequence is DC-STAMP domain-containing protein 2 (773 aa).

Over 1 to 26 (MPKVMKDVVHPLGGEEPSMARAVVRS) the chain is Cytoplasmic. A helical transmembrane segment spans residues 27–47 (VGGFTLGLSLATAYGLLELLV). Residues 48–51 (EGHS) are Extracellular-facing. A helical transmembrane segment spans residues 52–72 (PWGCLVGTLTLAAFLSLGMGF). Residues 73-233 (SRQVRATVLL…IPQAYHLCYV (161 aa)) lie on the Cytoplasmic side of the membrane. The chain crosses the membrane as a helical span at residues 234–254 (LMPFKLALCGLASLVQVFCVI). Residues 255-322 (PKYIQPFLRQ…SMKLHRVREA (68 aa)) lie on the Extracellular side of the membrane. N-linked (GlcNAc...) asparagine glycans are attached at residues asparagine 284 and asparagine 296. The chain crosses the membrane as a helical span at residues 323–343 (LALMGFTTPLLLVLLYLQALF). Residues 344-415 (YRYCYLNWDH…ILETFNLIRH (72 aa)) lie on the Cytoplasmic side of the membrane. Residues 416–436 (LLLVLFLVFLDYAVFWVLDLA) traverse the membrane as a helical segment. The Extracellular segment spans residues 437-499 (RHQLQGEIVA…LRPSEPDSTG (63 aa)). Asparagine 480 is a glycosylation site (N-linked (GlcNAc...) asparagine). A helical membrane pass occupies residues 500–520 (YIVIGVMYGLCFFITLFGSYV). The Cytoplasmic portion of the chain corresponds to 521–773 (SRLRRVICAS…LPDPSHPPPK (253 aa)). Low complexity predominate over residues 692–701 (SLSMESTSES). The disordered stretch occupies residues 692-773 (SLSMESTSES…LPDPSHPPPK (82 aa)). Over residues 758–773 (PLSPPSLPDPSHPPPK) the composition is skewed to pro residues.

In terms of assembly, interacts with DCST1.

The protein resides in the cytoplasmic vesicle. The protein localises to the secretory vesicle. It is found in the acrosome membrane. In terms of biological role, essential sperm cell-surface protein required for sperm-egg fusion and fertilization. The protein is DC-STAMP domain-containing protein 2 (DCST2) of Homo sapiens (Human).